We begin with the raw amino-acid sequence, 113 residues long: Protein FMC1 homolog (113 aa).

The tract at residues 94–113 (SAGLVGLQLPHQPGGKGWEP) is disordered.

It belongs to the FMC1 family. In terms of assembly, interacts with ATPAF2.

The protein resides in the mitochondrion. Functionally, plays a role in the assembly/stability of the mitochondrial membrane ATP synthase (F(1)F(0) ATP synthase or Complex V). This is Protein FMC1 homolog from Rattus norvegicus (Rat).